The chain runs to 138 residues: Acidic phospholipase A2 RV-7 (138 aa).

The signal sequence occupies residues 1-16 (MRTLWIVAVCLIGVEG). 7 disulfides stabilise this stretch: C42/C131, C44/C60, C59/C111, C65/C138, C66/C104, C73/C97, and C91/C102. Ca(2+)-binding residues include Y43, G45, and G47. Residue H63 is part of the active site. Position 64 (D64) interacts with Ca(2+). Residue D105 is part of the active site.

This sequence belongs to the phospholipase A2 family. Group II subfamily. D49 sub-subfamily. As to quaternary structure, heterodimer of a weakly toxic basic protein having phospholipase A2 activity (RV-4) and a non-toxic acidic protein which inhibits its enzymatic activity but potentiates its lethal potency and neurotoxicity (RV-7). Ca(2+) is required as a cofactor. In terms of tissue distribution, expressed by the venom gland.

It is found in the secreted. The catalysed reaction is a 1,2-diacyl-sn-glycero-3-phosphocholine + H2O = a 1-acyl-sn-glycero-3-phosphocholine + a fatty acid + H(+). Its function is as follows. Heterodimer: RV-4/RV-7 targets the presynaptic sites of the neuromuscular junction. Monomer: snake venom phospholipase A2 (PLA2) RV-7 that has low enzymatic activity and is not toxic. It inhibits the enzymatic activity of RV-4 in vitro but potentiates its lethal potency and neurotoxicity. It may facilitate the specific binding of RV-4 to its presynaptic binding sites, probably by acting as a chaperone, minimizing distraction and destruction of RV-4 en route to the site of action by reducing non-specific binding to muscle and other organs. PLA2 catalyzes the calcium-dependent hydrolysis of the 2-acyl groups in 3-sn-phosphoglycerides. The chain is Acidic phospholipase A2 RV-7 from Daboia siamensis (Eastern Russel's viper).